A 467-amino-acid chain; its full sequence is MADTKPLHQTRFEAAVSVIQSLPKNGSFQPSNEMMLKFYSFYKQATLGPCNTARPGFWDPVGRYKWDAWNSLGDMSKEDAMIAYVDEMKKIIETMPVTDKVEELLQVIGPFYEIVEDKKHGRGSGVTSELGSVLTSTPNGKAVNGKAESSDSGAESDEEQAAAKEFKKEDEEDEEDETEHSEEEEKEVEQQPGHETSAESIVLNGLTKNSRVLITEEPTPLPTKCLSEPGDNVAIPEGEPDIQSAVINDSEADREEDCTEDMAAVQHLTSDSDSEIFCDSMEQFGQDEADHSLLLQDAMLNGDITENSAGGELKDGGEDGKQPGHGAQGKTWNGKSEHFSSRRERSLRMQPGGEGSRSGQIGSSGDGDGWGSDRGPIGNLNEQIAVVLMRLQEDMQNVLQRLHSLEVQTASQAQSLLRESNTQSVEKKPSGWPFGISPGTLALAVVWPFVVHWLMHVFLQKRRRKQT.

The 90-residue stretch at 8 to 97 (HQTRFEAAVS…MKKIIETMPV (90 aa)) folds into the ACB domain. Residues 19–28 (IQSLPKNGSF), 39–43 (YSFYK), Lys65, and Tyr84 each bind an acyl-CoA. Disordered regions lie at residues 119 to 204 (KHGR…IVLN), 219 to 240 (TPLPTKCLSEPGDNVAIPEGEP), and 304 to 376 (ITEN…DRGP). Over residues 125–139 (GVTSELGSVLTSTPN) the composition is skewed to polar residues. The span at 170–187 (DEEDEEDETEHSEEEEKE) shows a compositional bias: acidic residues. 2 stretches are compositionally biased toward basic and acidic residues: residues 312–322 (ELKDGGEDGKQ) and 335–347 (KSEHFSSRRERSL). Over residues 352-372 (GGEGSRSGQIGSSGDGDGWGS) the composition is skewed to gly residues. Positions 382-411 (EQIAVVLMRLQEDMQNVLQRLHSLEVQTAS) form a coiled coil. Residues 439-459 (GTLALAVVWPFVVHWLMHVFL) traverse the membrane as a helical segment.

This sequence belongs to the ATG37 family.

The protein localises to the peroxisome membrane. Functionally, acyl-CoA binding protein which acts as the peroxisome receptor for pexophagy but is dispensable for aggrephagy and nonselective autophagy. Binds medium- and long-chain acyl-CoA esters. The chain is Acyl-CoA-binding domain-containing protein 5 (acbd5) from Xenopus laevis (African clawed frog).